We begin with the raw amino-acid sequence, 461 residues long: Alpha-L-fucosidase (461 aa).

The N-terminal stretch at 1–18 (MKMIIIFFILLILNLIKS) is a signal peptide.

Belongs to the glycosyl hydrolase 29 family.

The enzyme catalyses an alpha-L-fucoside + H2O = L-fucose + an alcohol. Alpha-L-fucosidase is responsible for hydrolyzing the alpha-1,6-linked fucose joined to the reducing-end N-acetylglucosamine of the carbohydrate moieties of glycoproteins. This Dictyostelium discoideum (Social amoeba) protein is Alpha-L-fucosidase (alfA).